We begin with the raw amino-acid sequence, 709 residues long: Polyribonucleotide nucleotidyltransferase (709 aa).

The Mg(2+) site is built by Asp487 and Asp493. The KH domain maps to Pro554–Ile613. The region spanning Gly623 to Lys691 is the S1 motif domain.

The protein belongs to the polyribonucleotide nucleotidyltransferase family. As to quaternary structure, component of the RNA degradosome, which is a multiprotein complex involved in RNA processing and mRNA degradation. Mg(2+) serves as cofactor.

Its subcellular location is the cytoplasm. The catalysed reaction is RNA(n+1) + phosphate = RNA(n) + a ribonucleoside 5'-diphosphate. Its function is as follows. Involved in mRNA degradation. Catalyzes the phosphorolysis of single-stranded polyribonucleotides processively in the 3'- to 5'-direction. In Vibrio cholerae serotype O1 (strain ATCC 39315 / El Tor Inaba N16961), this protein is Polyribonucleotide nucleotidyltransferase.